Consider the following 134-residue polypeptide: MPPKGRQGAAKKVRRKEKKNVAHGHAHIKSTFNNTIVSITDPSGNVISWASAGHVGFKGSRKSTPFAAQMAAESAARRAQEHGMRKVDVFVKGPGSGRETAIRSLQATGLEVGSIQDVTPTPHNGCRPPKRRRV.

Disordered stretches follow at residues 1–22 (MPPK…KNVA) and 114–134 (SIQD…RRRV). A compositionally biased stretch (basic residues) spans 9–22 (AAKKVRRKEKKNVA).

This sequence belongs to the universal ribosomal protein uS11 family. Part of the 30S ribosomal subunit. Interacts with proteins S7 and S18. Binds to IF-3.

Located on the platform of the 30S subunit, it bridges several disparate RNA helices of the 16S rRNA. Forms part of the Shine-Dalgarno cleft in the 70S ribosome. This Streptomyces avermitilis (strain ATCC 31267 / DSM 46492 / JCM 5070 / NBRC 14893 / NCIMB 12804 / NRRL 8165 / MA-4680) protein is Small ribosomal subunit protein uS11.